Reading from the N-terminus, the 344-residue chain is tRNA N6-adenosine threonylcarbamoyltransferase (344 aa).

Fe cation contacts are provided by H111 and H115. Residues 134–138, D167, G180, and N273 contribute to the substrate site; that span reads LVSGG. Residue D301 coordinates Fe cation.

The protein belongs to the KAE1 / TsaD family. It depends on Fe(2+) as a cofactor.

The protein localises to the cytoplasm. The enzyme catalyses L-threonylcarbamoyladenylate + adenosine(37) in tRNA = N(6)-L-threonylcarbamoyladenosine(37) in tRNA + AMP + H(+). Required for the formation of a threonylcarbamoyl group on adenosine at position 37 (t(6)A37) in tRNAs that read codons beginning with adenine. Is involved in the transfer of the threonylcarbamoyl moiety of threonylcarbamoyl-AMP (TC-AMP) to the N6 group of A37, together with TsaE and TsaB. TsaD likely plays a direct catalytic role in this reaction. This is tRNA N6-adenosine threonylcarbamoyltransferase from Cupriavidus taiwanensis (strain DSM 17343 / BCRC 17206 / CCUG 44338 / CIP 107171 / LMG 19424 / R1) (Ralstonia taiwanensis (strain LMG 19424)).